The primary structure comprises 468 residues: Mitochondrial distribution and morphology protein 10 (468 aa).

Residues 370 to 386 (ERDGLPGIQRDDHDMHH) are compositionally biased toward basic and acidic residues. The tract at residues 370–394 (ERDGLPGIQRDDHDMHHHPQRPHAS) is disordered.

Belongs to the MDM10 family. As to quaternary structure, component of the ER-mitochondria encounter structure (ERMES) or MDM complex, composed of MMM1, MDM10, MDM12 and MDM34. Associates with the mitochondrial outer membrane sorting assembly machinery SAM(core) complex.

Its subcellular location is the mitochondrion outer membrane. In terms of biological role, component of the ERMES/MDM complex, which serves as a molecular tether to connect the endoplasmic reticulum and mitochondria. Components of this complex are involved in the control of mitochondrial shape and protein biogenesis and may function in phospholipid exchange. MDM10 is involved in the late assembly steps of the general translocase of the mitochondrial outer membrane (TOM complex). Functions in the TOM40-specific route of the assembly of outer membrane beta-barrel proteins, including the association of TOM40 with the receptor TOM22 and small TOM proteins. Can associate with the SAM(core) complex as well as the MDM12-MMM1 complex, both involved in late steps of the major beta-barrel assembly pathway, that is responsible for biogenesis of all outer membrane beta-barrel proteins. May act as a switch that shuttles between both complexes and channels precursor proteins into the TOM40-specific pathway. Plays a role in mitochondrial morphology and in the inheritance of mitochondria. This Ajellomyces dermatitidis (strain ER-3 / ATCC MYA-2586) (Blastomyces dermatitidis) protein is Mitochondrial distribution and morphology protein 10.